We begin with the raw amino-acid sequence, 896 residues long: Translation initiation factor IF-2 (896 aa).

Residues 49-310 are disordered; it reads LKKEHGDTSG…MQQGFDKSAT (262 aa). Residues 57 to 66 are compositionally biased toward polar residues; it reads SGETEPTRLT. Basic and acidic residues-rich tracts occupy residues 101–174, 184–240, and 250–263; these read STIE…KDMN, AKKE…KSAD, and REAEDAADKKDEKA. Residues 284–295 are compositionally biased toward basic residues; that stretch reads RNQRGRGGKGKL. The region spanning 395–564 is the tr-type G domain; that stretch reads GRAPVVTIMG…LLQSEVLELT (170 aa). Residues 404–411 form a G1 region; sequence GHVDHGKT. 404–411 lines the GTP pocket; sequence GHVDHGKT. A G2 region spans residues 429–433; sequence GITQH. Positions 450-453 are G3; that stretch reads DTPG. Residues 450 to 454 and 504 to 507 each bind GTP; these read DTPGH and NKID. The tract at residues 504–507 is G4; sequence NKID. Residues 540–542 are G5; the sequence is SAK.

The protein belongs to the TRAFAC class translation factor GTPase superfamily. Classic translation factor GTPase family. IF-2 subfamily.

It localises to the cytoplasm. Its function is as follows. One of the essential components for the initiation of protein synthesis. Protects formylmethionyl-tRNA from spontaneous hydrolysis and promotes its binding to the 30S ribosomal subunits. Also involved in the hydrolysis of GTP during the formation of the 70S ribosomal complex. This is Translation initiation factor IF-2 from Vibrio atlanticus (strain LGP32) (Vibrio splendidus (strain Mel32)).